The sequence spans 495 residues: Siroheme synthase 2 (495 aa).

The interval 1 to 205 (MDHYPIFLNL…GREREAEQAM (205 aa)) is precorrin-2 dehydrogenase /sirohydrochlorin ferrochelatase. NAD(+)-binding positions include 22 to 23 (ET) and 43 to 44 (PD). Residue S130 is modified to Phosphoserine. The segment at 220–495 (GEVYLVGAGP…HPAPADTEQA (276 aa)) is uroporphyrinogen-III C-methyltransferase. Residue P229 participates in S-adenosyl-L-methionine binding. Residue D252 is the Proton acceptor of the active site. K274 (proton donor) is an active-site residue. S-adenosyl-L-methionine-binding positions include 305 to 307 (GGD), I310, 335 to 336 (TA), M387, and A416. Residues 471 to 495 (FPEHGCLRGEPRPTRHPAPADTEQA) form a disordered region.

It in the N-terminal section; belongs to the precorrin-2 dehydrogenase / sirohydrochlorin ferrochelatase family. In the C-terminal section; belongs to the precorrin methyltransferase family.

The enzyme catalyses uroporphyrinogen III + 2 S-adenosyl-L-methionine = precorrin-2 + 2 S-adenosyl-L-homocysteine + H(+). It catalyses the reaction precorrin-2 + NAD(+) = sirohydrochlorin + NADH + 2 H(+). It carries out the reaction siroheme + 2 H(+) = sirohydrochlorin + Fe(2+). It participates in cofactor biosynthesis; adenosylcobalamin biosynthesis; precorrin-2 from uroporphyrinogen III: step 1/1. It functions in the pathway cofactor biosynthesis; adenosylcobalamin biosynthesis; sirohydrochlorin from precorrin-2: step 1/1. Its pathway is porphyrin-containing compound metabolism; siroheme biosynthesis; precorrin-2 from uroporphyrinogen III: step 1/1. The protein operates within porphyrin-containing compound metabolism; siroheme biosynthesis; siroheme from sirohydrochlorin: step 1/1. It participates in porphyrin-containing compound metabolism; siroheme biosynthesis; sirohydrochlorin from precorrin-2: step 1/1. Multifunctional enzyme that catalyzes the SAM-dependent methylations of uroporphyrinogen III at position C-2 and C-7 to form precorrin-2 via precorrin-1. Then it catalyzes the NAD-dependent ring dehydrogenation of precorrin-2 to yield sirohydrochlorin. Finally, it catalyzes the ferrochelation of sirohydrochlorin to yield siroheme. The protein is Siroheme synthase 2 of Halorhodospira halophila (strain DSM 244 / SL1) (Ectothiorhodospira halophila (strain DSM 244 / SL1)).